We begin with the raw amino-acid sequence, 195 residues long: dTTP/UTP pyrophosphatase (195 aa).

The active-site Proton acceptor is D76.

It belongs to the Maf family. YhdE subfamily. Requires a divalent metal cation as cofactor.

The protein localises to the cytoplasm. It catalyses the reaction dTTP + H2O = dTMP + diphosphate + H(+). The enzyme catalyses UTP + H2O = UMP + diphosphate + H(+). Its function is as follows. Nucleoside triphosphate pyrophosphatase that hydrolyzes dTTP and UTP. May have a dual role in cell division arrest and in preventing the incorporation of modified nucleotides into cellular nucleic acids. This is dTTP/UTP pyrophosphatase from Shewanella frigidimarina (strain NCIMB 400).